Here is a 130-residue protein sequence, read N- to C-terminus: Protein ApaG (130 aa).

Residues 3-127 (RALTRDIEVV…FSLDSPGLLR (125 aa)) enclose the ApaG domain. The disordered stretch occupies residues 63–83 (EVTGPGVVGEQPRLSPGDTYE).

The chain is Protein ApaG from Rhizobium etli (strain ATCC 51251 / DSM 11541 / JCM 21823 / NBRC 15573 / CFN 42).